Consider the following 22-residue polypeptide: Major outer membrane protein (22 aa).

It belongs to the Gram-negative porin family. In terms of assembly, disulfide bond interactions within and between MOMP molecules and other components form high molecular-weight oligomers.

It is found in the cell outer membrane. In terms of biological role, structural rigidity of the outer membrane of elementary bodies and porin forming, permitting diffusion of solutes through the intracellular reticulate body membrane. The protein is Major outer membrane protein (ompH) of Avibacterium gallinarum (Pasteurella gallinarum).